A 699-amino-acid polypeptide reads, in one-letter code: UvrABC system protein C (699 aa).

A compositionally biased stretch (low complexity) spans 1–51 (MIQHPTDTPEVAADAAAEPERAAGAAGATPQPSQDAVEPAADVDAATASLA). Residues 1 to 59 (MIQHPTDTPEVAADAAAEPERAAGAAGATPQPSQDAVEPAADVDAATASLAAEDDDEPV) are disordered. Residues 92-170 (TSPGVYRMLN…IKQLRPRFNV (79 aa)) form the GIY-YIG domain. The UVR domain occupies 280-315 (RLVKQELAGEMEKASAELEFETAALYRDRLAALSAI).

It belongs to the UvrC family. In terms of assembly, interacts with UvrB in an incision complex.

The protein resides in the cytoplasm. Functionally, the UvrABC repair system catalyzes the recognition and processing of DNA lesions. UvrC both incises the 5' and 3' sides of the lesion. The N-terminal half is responsible for the 3' incision and the C-terminal half is responsible for the 5' incision. The sequence is that of UvrABC system protein C from Rhodopseudomonas palustris (strain BisB18).